The following is a 485-amino-acid chain: Cobyric acid synthase (485 aa).

The region spanning 252–439 (KVRIAVPILP…VHGLFGDDRQ (188 aa)) is the GATase cobBQ-type domain. C334 functions as the Nucleophile in the catalytic mechanism. H431 is a catalytic residue.

Belongs to the CobB/CobQ family. CobQ subfamily.

Its pathway is cofactor biosynthesis; adenosylcobalamin biosynthesis. Functionally, catalyzes amidations at positions B, D, E, and G on adenosylcobyrinic A,C-diamide. NH(2) groups are provided by glutamine, and one molecule of ATP is hydrogenolyzed for each amidation. The chain is Cobyric acid synthase from Azorhizobium caulinodans (strain ATCC 43989 / DSM 5975 / JCM 20966 / LMG 6465 / NBRC 14845 / NCIMB 13405 / ORS 571).